Reading from the N-terminus, the 548-residue chain is Pentatricopeptide repeat-containing protein At1g62680, mitochondrial (548 aa).

A mitochondrion-targeting transit peptide spans 1–43 (MQRSIAMTAKRFLHRNLLENGKPRTASSPSFSHCSSCRCWVRA). PPR repeat units lie at residues 84–118 (SIVD…GIRN), 119–153 (DLYT…GYEP), 154–188 (DRVT…GYKP), 189–223 (DIVA…GIRP), 224–258 (NVVT…KITP), 259–293 (NVIT…SIDP), 294–328 (DIVT…GCLA), 329–363 (DVVS…GLVS), 364–398 (NTVT…GISP), 399–433 (DIWT…EMDL), 434–468 (DIVT…GLKP), and 469–503 (DIVT…GLMK).

The protein belongs to the PPR family. P subfamily.

It is found in the mitochondrion. In Arabidopsis thaliana (Mouse-ear cress), this protein is Pentatricopeptide repeat-containing protein At1g62680, mitochondrial.